Consider the following 323-residue polypeptide: tRNA U34 carboxymethyltransferase (323 aa).

Carboxy-S-adenosyl-L-methionine-binding positions include Lys-91, Trp-105, Lys-110, Gly-130, 152–154 (DPS), 181–182 (IE), Met-196, Tyr-200, and Arg-315.

It belongs to the class I-like SAM-binding methyltransferase superfamily. CmoB family. As to quaternary structure, homotetramer.

It catalyses the reaction carboxy-S-adenosyl-L-methionine + 5-hydroxyuridine(34) in tRNA = 5-carboxymethoxyuridine(34) in tRNA + S-adenosyl-L-homocysteine + H(+). Catalyzes carboxymethyl transfer from carboxy-S-adenosyl-L-methionine (Cx-SAM) to 5-hydroxyuridine (ho5U) to form 5-carboxymethoxyuridine (cmo5U) at position 34 in tRNAs. This chain is tRNA U34 carboxymethyltransferase, found in Vibrio vulnificus (strain CMCP6).